The following is a 396-amino-acid chain: Probable sugar efflux transporter (396 aa).

12 helical membrane passes run 15-35 (VVTLAIAAFIFNTTEFVPVGL), 50-70 (VGIMLTIYAWVVAVMSLPFML), 81-101 (LICLFVLFIASHVLSFLAWNF), 103-123 (VLVISRIGIAFAHAIFWSITA), 136-156 (AQALSLIATGTALAMVLGLPI), 169-189 (TFFAIGMGALITLLCLIKLLP), 209-229 (PALMSLYVLTVVVVTAHYTAY), 246-266 (FATVLLLILGGAGIIGSLVFG), 275-295 (SLVSIAIALLVVCLLLLLPAA), 301-321 (LAILSIFWGIAIMVIGLGMQV), 333-353 (VAMALFSGIFNIGIGAGALVG), and 364-384 (AIGYIGAIPACAALVWAVLIF).

It belongs to the major facilitator superfamily. SotB (TC 2.A.1.2) family.

The protein resides in the cell inner membrane. Its function is as follows. Involved in the efflux of sugars. The physiological role may be the reduction of the intracellular concentration of toxic sugars or sugar metabolites. This is Probable sugar efflux transporter from Salmonella agona (strain SL483).